The primary structure comprises 525 residues: Glucose-6-phosphate isomerase (525 aa).

The active-site Proton donor is Glu-347. Residues His-378 and Lys-493 contribute to the active site.

It belongs to the GPI family.

The protein resides in the cytoplasm. It catalyses the reaction alpha-D-glucose 6-phosphate = beta-D-fructose 6-phosphate. Its pathway is carbohydrate biosynthesis; gluconeogenesis. It functions in the pathway carbohydrate degradation; glycolysis; D-glyceraldehyde 3-phosphate and glycerone phosphate from D-glucose: step 2/4. Its function is as follows. Catalyzes the reversible isomerization of glucose-6-phosphate to fructose-6-phosphate. The sequence is that of Glucose-6-phosphate isomerase from Chlamydia trachomatis serovar L2 (strain ATCC VR-902B / DSM 19102 / 434/Bu).